The primary structure comprises 425 residues: Serine--tRNA ligase (425 aa).

Residues 108-134 (YPNLPSEACPDGRSEDDNKEVRRWGDP) are disordered. Over residues 117-134 (PDGRSEDDNKEVRRWGDP) the composition is skewed to basic and acidic residues. 233–235 (TAE) contacts L-serine. 264 to 266 (RRE) is a binding site for ATP. E287 lines the L-serine pocket. 351 to 354 (EISS) lines the ATP pocket. S385 contacts L-serine.

Belongs to the class-II aminoacyl-tRNA synthetase family. Type-1 seryl-tRNA synthetase subfamily. Homodimer. The tRNA molecule binds across the dimer.

The protein resides in the cytoplasm. The catalysed reaction is tRNA(Ser) + L-serine + ATP = L-seryl-tRNA(Ser) + AMP + diphosphate + H(+). The enzyme catalyses tRNA(Sec) + L-serine + ATP = L-seryl-tRNA(Sec) + AMP + diphosphate + H(+). It participates in aminoacyl-tRNA biosynthesis; selenocysteinyl-tRNA(Sec) biosynthesis; L-seryl-tRNA(Sec) from L-serine and tRNA(Sec): step 1/1. Functionally, catalyzes the attachment of serine to tRNA(Ser). Is also able to aminoacylate tRNA(Sec) with serine, to form the misacylated tRNA L-seryl-tRNA(Sec), which will be further converted into selenocysteinyl-tRNA(Sec). The chain is Serine--tRNA ligase from Synechococcus sp. (strain CC9311).